Reading from the N-terminus, the 165-residue chain is Large ribosomal subunit protein uL10 (165 aa).

It belongs to the universal ribosomal protein uL10 family. Part of the ribosomal stalk of the 50S ribosomal subunit. The N-terminus interacts with L11 and the large rRNA to form the base of the stalk. The C-terminus forms an elongated spine to which L12 dimers bind in a sequential fashion forming a multimeric L10(L12)X complex.

Functionally, forms part of the ribosomal stalk, playing a central role in the interaction of the ribosome with GTP-bound translation factors. This is Large ribosomal subunit protein uL10 from Shewanella pealeana (strain ATCC 700345 / ANG-SQ1).